Reading from the N-terminus, the 159-residue chain is Mitotic-spindle organizing protein 2 (159 aa).

A disordered region spans residues 87–159; it reads LASDPQDSVP…SGKSNSRSSP (73 aa). A compositionally biased stretch (polar residues) spans 91 to 105; that stretch reads PQDSVPISLSTSTSE. Arg-111 is modified (omega-N-methylarginine). Ser-153 is modified (phosphoserine).

The protein belongs to the MOZART2 family. As to quaternary structure, associates with the gamma-tubulin ring complex (gTuRC) consisting of TUBGCP2, TUBGCP3, TUBGCP4, TUBGCP5 and TUBGCP6 and gamma-tubulin TUBG1 or TUBG2; within the complex, interacts with TUBGCP2; the interaction plays a role in gTuRC activation.

The protein localises to the cytoplasm. It localises to the cytoskeleton. The protein resides in the microtubule organizing center. It is found in the centrosome. Its subcellular location is the spindle. Functionally, required for the recruitment and the assembly of the gamma-tubulin ring complex (gTuRC) at the centrosome. The gTuRC regulates the minus-end nucleation of alpha-beta tubulin heterodimers that grow into microtubule protafilaments, a critical step in centrosome duplication and spindle formation. The protein is Mitotic-spindle organizing protein 2 (Mzt2) of Mus musculus (Mouse).